Consider the following 128-residue polypeptide: Keratin-associated protein 21-1 (128 aa).

Positions 11 to 117 (GGCGYGSRYG…RYGCGYGSGC (107 aa)) are 51 X 2 AA repeats of G-[YCGS].

This sequence belongs to the KRTAP type 21 family. In terms of assembly, interacts with hair keratins. Strong expression in narrowly defined pattern restricted to the lower and middle cortical regions of the hair shaft in both developing and cycling hair. During hair follicle regression (catagen), expression levels decrease until expression is no longer detectable in follicles at resting stage (telogen).

Functionally, in the hair cortex, hair keratin intermediate filaments are embedded in an interfilamentous matrix, consisting of hair keratin-associated proteins (KRTAP), which are essential for the formation of a rigid and resistant hair shaft through their extensive disulfide bond cross-linking with abundant cysteine residues of hair keratins. The matrix proteins include the high-sulfur and high-glycine-tyrosine keratins. The polypeptide is Keratin-associated protein 21-1 (Krtap21-1) (Mus musculus (Mouse)).